The sequence spans 258 residues: Hemin import ATP-binding protein HmuV (258 aa).

Residues methionine 1–proline 238 enclose the ABC transporter domain. An ATP-binding site is contributed by glycine 34–serine 41.

It belongs to the ABC transporter superfamily. Heme (hemin) importer (TC 3.A.1.14.5) family. In terms of assembly, the complex is composed of two ATP-binding proteins (HmuV), two transmembrane proteins (HmuU) and a solute-binding protein (HmuT).

It localises to the cell inner membrane. Functionally, part of the ABC transporter complex HmuTUV involved in hemin import. Responsible for energy coupling to the transport system. The chain is Hemin import ATP-binding protein HmuV from Idiomarina loihiensis (strain ATCC BAA-735 / DSM 15497 / L2-TR).